Here is a 151-residue protein sequence, read N- to C-terminus: Superoxide dismutase [Cu-Zn] A (151 aa).

A lipid anchor (S-palmitoyl cysteine) is attached at cysteine 6. Residues histidine 45, histidine 47, and histidine 62 each coordinate Cu cation. An intrachain disulfide couples cysteine 56 to cysteine 144. Zn(2+) is bound by residues histidine 62, histidine 70, histidine 79, and aspartate 82. Histidine 118 is a Cu cation binding site.

Belongs to the Cu-Zn superoxide dismutase family. In terms of assembly, homodimer, and heterodimer of Superoxide dismutase [Cu-Zn] A and B. Requires Cu cation as cofactor. Zn(2+) serves as cofactor.

The protein localises to the cytoplasm. The protein resides in the nucleus. The enzyme catalyses 2 superoxide + 2 H(+) = H2O2 + O2. Functionally, destroys radicals which are normally produced within the cells and which are toxic to biological systems. This is Superoxide dismutase [Cu-Zn] A (sod1-a) from Xenopus laevis (African clawed frog).